The following is a 318-amino-acid chain: Probable plastid-lipid-associated protein 1, chloroplastic (318 aa).

A chloroplast-targeting transit peptide spans 1 to 55; sequence MATVPLFTQFPCKTLNPSSSNTKHQSKSPILLPINSINRRSEIGVSVHRPDFKIR. Residue Thr-57 is modified to Phosphothreonine.

This sequence belongs to the PAP/fibrillin family. As to quaternary structure, interacts (via N-terminus) with ABI2. Expressed in flower buds. Detected in tapetal cells, endothecium and connective in anthers and in subepidermal cells in filaments.

It is found in the plastid. The protein localises to the chloroplast. The protein resides in the plastoglobule. It localises to the chloroplast thylakoid. Its function is as follows. Probably involved in light/cold stress-related jasmonate (JA) biosynthesis. Contributes to the protection of photosystem II (PSII) against light stress. The sequence is that of Probable plastid-lipid-associated protein 1, chloroplastic (PAP1) from Arabidopsis thaliana (Mouse-ear cress).